The chain runs to 245 residues: tRNA1(Val) (adenine(37)-N6)-methyltransferase (245 aa).

It belongs to the methyltransferase superfamily. tRNA (adenine-N(6)-)-methyltransferase family.

It is found in the cytoplasm. The catalysed reaction is adenosine(37) in tRNA1(Val) + S-adenosyl-L-methionine = N(6)-methyladenosine(37) in tRNA1(Val) + S-adenosyl-L-homocysteine + H(+). Specifically methylates the adenine in position 37 of tRNA(1)(Val) (anticodon cmo5UAC). The polypeptide is tRNA1(Val) (adenine(37)-N6)-methyltransferase (Escherichia coli (strain SE11)).